Here is an 851-residue protein sequence, read N- to C-terminus: DNA mismatch repair protein MutS (851 aa).

602–609 contributes to the ATP binding site; the sequence is GPNMSGKS.

Belongs to the DNA mismatch repair MutS family.

This protein is involved in the repair of mismatches in DNA. It is possible that it carries out the mismatch recognition step. This protein has a weak ATPase activity. This is DNA mismatch repair protein MutS from Streptococcus pyogenes serotype M28 (strain MGAS6180).